The following is a 713-amino-acid chain: Cyclomaltodextrin glucanotransferase (713 aa).

The first 27 residues, 1–27 (MKKFLKSTAALALGLSLTFGLFSPAQA), serve as a signal peptide directing secretion. The A1 stretch occupies residues 28–165 (APDTSVSNKQ…NIKVIIDFAP (138 aa)). Ca(2+) contacts are provided by Asp-54, Asn-56, Asn-59, and Asn-60. Cys-70 and Cys-77 are oxidised to a cystine. 2 residues coordinate Ca(2+): Gly-78 and Asp-80. Position 127 to 128 (127 to 128 (YW)) interacts with substrate. Position 166 (Asn-166) interacts with Ca(2+). The segment at 166 to 229 (NHTSPASSDQ…NLYDLADLNH (64 aa)) is b. Substrate-binding positions include His-167 and 172–174 (SSD). Ile-217 serves as a coordination point for Ca(2+). Residue 220-223 (NLYD) coordinates substrate. Asp-226 lines the Ca(2+) pocket. An A2 region spans residues 230–433 (NNSTVDVYLK…LRKCNPAIAY (204 aa)). Position 254 (Arg-254) interacts with substrate. Residue Asp-256 is the Nucleophile of the active site. Residue 259 to 260 (KH) participates in substrate binding. His-260 is a binding site for Ca(2+). Glu-284 functions as the Proton donor in the catalytic mechanism. Position 342 (Ala-342) interacts with Ca(2+). 3 residues coordinate substrate: His-354, Asp-398, and Arg-402. Residues 434-522 (GSTQERWINN…GTAVWQYTAA (89 aa)) form a c region. Positions 523-609 (TATPTIGHVG…SNVYDNFEVL (87 aa)) are d. Residues 526–607 (PTIGHVGPMM…TASNVYDNFE (82 aa)) form the IPT/TIG domain. Asp-604 lines the Ca(2+) pocket. Residues 608–713 (VLSGDQVSVR…TATINVNWQP (106 aa)) form the CBM20 domain. An e region spans residues 610–713 (SGDQVSVRFV…TATINVNWQP (104 aa)).

This sequence belongs to the glycosyl hydrolase 13 family. In terms of assembly, monomer. Ca(2+) is required as a cofactor.

It localises to the secreted. It catalyses the reaction Cyclizes part of a (1-&gt;4)-alpha-D-glucan chain by formation of a (1-&gt;4)-alpha-D-glucosidic bond.. The chain is Cyclomaltodextrin glucanotransferase (cgt) from Niallia circulans (Bacillus circulans).